A 471-amino-acid chain; its full sequence is Membrane-associated sulfotransferase kil1 (471 aa).

Over 1–12 the chain is Cytoplasmic; that stretch reads MSTTSMILTKKN. Residues 13-33 form a helical; Signal-anchor for type II membrane protein membrane-spanning segment; the sequence is IIILSIIIITIIAYQFYITSP. The Lumenal segment spans residues 34-471; the sequence is QSFPSSNTIT…LLNRDFKWQN (438 aa). Asn-47 carries N-linked (GlcNAc...) asparagine glycosylation. Composition is skewed to low complexity over residues 89–105 and 112–127; these read NQNE…NNNK and NNNN…NNNN. The tract at residues 89 to 127 is disordered; sequence NQNENQNQINNEYNNNKLNDEQENNNNNNYNNNNNNNNN. 3'-phosphoadenylyl sulfate contacts are provided by residues 167 to 172, Arg-252, and Ser-260; that span reads KSGTTF. Residues Asn-324 and Asn-344 are each glycosylated (N-linked (GlcNAc...) asparagine). Tyr-348 is a 3'-phosphoadenylyl sulfate binding site.

This sequence belongs to the sulfotransferase 1 family.

It is found in the membrane. Sulfotransferase involved in intracellular killing of bacteria. This Dictyostelium discoideum (Social amoeba) protein is Membrane-associated sulfotransferase kil1 (kil1).